The primary structure comprises 346 residues: Phosphate acyltransferase (346 aa).

This sequence belongs to the PlsX family. In terms of assembly, homodimer. Probably interacts with PlsY.

It localises to the cytoplasm. The enzyme catalyses a fatty acyl-[ACP] + phosphate = an acyl phosphate + holo-[ACP]. Its pathway is lipid metabolism; phospholipid metabolism. In terms of biological role, catalyzes the reversible formation of acyl-phosphate (acyl-PO(4)) from acyl-[acyl-carrier-protein] (acyl-ACP). This enzyme utilizes acyl-ACP as fatty acyl donor, but not acyl-CoA. This is Phosphate acyltransferase from Psychromonas ingrahamii (strain DSM 17664 / CCUG 51855 / 37).